The sequence spans 346 residues: Glycosyltransferase 1 domain-containing protein 1 (346 aa).

Residues 1–16 (MRLLFLAVLRPHTGNA) form the signal peptide.

It belongs to the glycosyltransferase group 1 family. Glycosyltransferase 4 subfamily.

It localises to the secreted. The polypeptide is Glycosyltransferase 1 domain-containing protein 1 (GLT1D1) (Homo sapiens (Human)).